The chain runs to 432 residues: Methylenetetrahydrofolate--tRNA-(uracil-5-)-methyltransferase TrmFO (432 aa).

Residue 7–12 (GAGLAG) participates in FAD binding.

The protein belongs to the MnmG family. TrmFO subfamily. The cofactor is FAD.

The protein localises to the cytoplasm. It catalyses the reaction uridine(54) in tRNA + (6R)-5,10-methylene-5,6,7,8-tetrahydrofolate + NADH + H(+) = 5-methyluridine(54) in tRNA + (6S)-5,6,7,8-tetrahydrofolate + NAD(+). The catalysed reaction is uridine(54) in tRNA + (6R)-5,10-methylene-5,6,7,8-tetrahydrofolate + NADPH + H(+) = 5-methyluridine(54) in tRNA + (6S)-5,6,7,8-tetrahydrofolate + NADP(+). Catalyzes the folate-dependent formation of 5-methyl-uridine at position 54 (M-5-U54) in all tRNAs. This chain is Methylenetetrahydrofolate--tRNA-(uracil-5-)-methyltransferase TrmFO, found in Anoxybacillus flavithermus (strain DSM 21510 / WK1).